The following is a 422-amino-acid chain: MAMDKKGDLEWMPPRPEPVHWRNRQRSLAYSVTLTLVALFFTFALRPEAFPSFLVRKGLHKSPLEQVLTRVPLTDGHNDFAIWTRAFYQNHIYRANFTDHDELYGQVDFPRLRKGRLGAQFWSVYVECARNPNEPGVQYEIVRDTFQQIDLVHRMINHFPDFLVPASSVADVHHNFYHSPGRISSLLGIEGLHQIGGSASVLRMYHELGVRYASLTHTCHNEYADSEAPEEPRHGGLSTAGEAIVAEMNRMGMIVDLSHTSLATQRAVFNVTRAPVMYSHSSAYALCPHSRNVPDDLLQMLKENDGIVMISLYPEYTNCQDADAASLADVADHIQYVGNLIGYRHVGLGSDFDGMSHGPKGLEDVSKYPDLIQELLDRGVSVDDLVGVTGGNVLRVLGDVEHVARSLADTLPLEDDVKPFFE.

Residues 28 to 45 (LAYSVTLTLVALFFTFAL) form a helical membrane-spanning segment. Zn(2+) contacts are provided by H77 and D79. A glycan (N-linked (GlcNAc...) asparagine) is linked at N96. C128 and C219 are joined by a disulfide. E190 provides a ligand contact to Zn(2+). H217 contributes to the substrate binding site. N-linked (GlcNAc...) asparagine glycosylation is present at N270. An intrachain disulfide couples C287 to C319. Residues R291 and D351 each contribute to the substrate site.

The protein belongs to the metallo-dependent hydrolases superfamily. Peptidase M19 family. The cofactor is Zn(2+).

It is found in the membrane. It carries out the reaction an L-aminoacyl-L-amino acid + H2O = 2 an L-alpha-amino acid. Its pathway is mycotoxin biosynthesis. Dipeptidase; part of the gene cluster that mediates the biosynthesis of aspirochlorine (or antibiotic A30641), an unusual halogenated spiro compound with distinctive antifungal properties due to selective inhibition of protein biosynthesis, and which is also active against bacteria, viruses, and murine tumor cells. The non-ribosomal peptide synthetase (NRPS) aclP is responsible the formation of the diketopiperazine (DKP) core from the condensation of 2 phenylalanine residues. One Phe residue is tailored into chlorotyrosine by hydroxylation and chlorination, whereas the second Phe undergoes an unprecedented C-C bond cleavage to be converted into glycine. After formation of the DKP, sulfur is incorporated into the DKP by conjugation with glutathione by aclG, followed by its stepwise degradation to the thiol by aclI, aclJ and aclK, and the dithiol oxidation by aclT. In addition, oxygenases (aclB, aclC, aclL and aclO) and O-methyltransferases (aclM and aclU) act as tailoring enzymes to produce the intermediate dechloroaspirochlorine. Ultimately, chlorination of dechloroaspirochlorine by the halogenase aclH is the last step in the aspirochlorine pathway. The sequence is that of Dipeptidase aclJ from Aspergillus oryzae (strain ATCC 42149 / RIB 40) (Yellow koji mold).